Consider the following 309-residue polypeptide: Nucleoside kinase (309 aa).

Substrate-binding residues include aspartate 16, glycine 42, and asparagine 46. Glutamine 108 serves as a coordination point for ATP. Substrate is bound by residues 110 to 112 and glutamine 166; that span reads SYF. Residues asparagine 189 and 217–223 each bind ATP; that span reads KTYGKEG. Aspartate 249 is a substrate binding site. Catalysis depends on aspartate 249, which acts as the Proton acceptor.

It belongs to the carbohydrate kinase PfkB family. In terms of assembly, homodimer. Mg(2+) serves as cofactor.

Catalyzes the phosphorylation of a wide range of nucleosides to yield nucleoside monophosphates, using ATP, ITP or GTP as phosphate donor. In Methanothermobacter thermautotrophicus (strain ATCC 29096 / DSM 1053 / JCM 10044 / NBRC 100330 / Delta H) (Methanobacterium thermoautotrophicum), this protein is Nucleoside kinase.